The chain runs to 257 residues: Ribosomal large subunit pseudouridine synthase B (257 aa).

The S4 RNA-binding domain occupies 3 to 63 (AKIQKILSDL…KKKIIVKRNK (61 aa)). The active-site Nucleophile is the aspartate 109.

The protein belongs to the pseudouridine synthase RsuA family.

The catalysed reaction is uridine(2605) in 23S rRNA = pseudouridine(2605) in 23S rRNA. In terms of biological role, responsible for synthesis of pseudouridine from uracil-2605 in 23S ribosomal RNA. This chain is Ribosomal large subunit pseudouridine synthase B (rluB), found in Buchnera aphidicola subsp. Schizaphis graminum (strain Sg).